A 159-amino-acid chain; its full sequence is Putative pre-16S rRNA nuclease (159 aa).

It belongs to the YqgF nuclease family.

The protein resides in the cytoplasm. In terms of biological role, could be a nuclease involved in processing of the 5'-end of pre-16S rRNA. The polypeptide is Putative pre-16S rRNA nuclease (Thermobifida fusca (strain YX)).